We begin with the raw amino-acid sequence, 336 residues long: MLIAQRPTLSEEVVSENRSRFIIEPLEPGFGYTLGNSLRRTLLSSIPGAAVTSIRIDGVLHEFTTVPGVKEDVTEIILNIKNLSVSSEHDEPVVAYLRKQGPGVVTAADIAPPAGVEFHNPDLHIATLNSKGKFELELTIERGRGYVSAAQNKSGDSEIGRIPVDSIYSPVMKVTFRVEATRVEQRTDFDKLIVDVETKQAIAPRDAVASAGTTLVELFGLARELNTAAEGIEIGPSPTDAALAADMALPIEDLDLTVRSYNCLKREGIHTVGELVARSEADLMDIRNFGAKSIDEVKAKLVELGLSLKDSPPGFDLAARAAAIEEDDAAFSDDEL.

The alpha N-terminal domain (alpha-NTD) stretch occupies residues 1-226 (MLIAQRPTLS…ELFGLARELN (226 aa)). An alpha C-terminal domain (alpha-CTD) region spans residues 241–336 (AALAADMALP…DDAAFSDDEL (96 aa)).

The protein belongs to the RNA polymerase alpha chain family. Homodimer. The RNAP catalytic core consists of 2 alpha, 1 beta, 1 beta' and 1 omega subunit. When a sigma factor is associated with the core the holoenzyme is formed, which can initiate transcription.

It catalyses the reaction RNA(n) + a ribonucleoside 5'-triphosphate = RNA(n+1) + diphosphate. In terms of biological role, DNA-dependent RNA polymerase catalyzes the transcription of DNA into RNA using the four ribonucleoside triphosphates as substrates. This chain is DNA-directed RNA polymerase subunit alpha, found in Paenarthrobacter aurescens (strain TC1).